A 919-amino-acid polypeptide reads, in one-letter code: GPI ethanolamine phosphate transferase 1 (919 aa).

The Cytoplasmic portion of the chain corresponds to 1–9 (MWNKTRTTL). Residues 10 to 30 (LAVGVLFHLFYLWSIFDIYFI) form a helical membrane-spanning segment. Residues 31-457 (SPLVHGMSPY…TTYNWRFIRT (427 aa)) lie on the Lumenal side of the membrane. N-linked (GlcNAc...) asparagine glycosylation is found at asparagine 90, asparagine 138, asparagine 198, asparagine 202, asparagine 286, and asparagine 312. The chain crosses the membrane as a helical span at residues 458-478 (IVTFGFVGWIFFSFIIFLKSF). Residues 479–488 (ILENVIDDQK) are Cytoplasmic-facing. The helical transmembrane segment at 489-509 (ASPLSHAVFGSIGILLNWILF) threads the bilayer. The Lumenal segment spans residues 510–512 (YQH). Residues 513 to 533 (SPFNFYMYLLFPLYFWSYIFT) form a helical membrane-spanning segment. Over 534-553 (NRSVLRSGIKEFFKGTSPWK) the chain is Cytoplasmic. Residues 554–574 (RVLITISIISVYEGIVYGFFH) traverse the membrane as a helical segment. Topologically, residues 575–576 (RW) are lumenal. The helical transmembrane segment at 577–597 (TFTLITNILAFYPFICGVREL) threads the bilayer. Residue serine 598 is a topological domain, cytoplasmic. A helical transmembrane segment spans residues 599 to 619 (VNILWIITSVLLSTFTLFDAV). At 620–626 (KIEDLNQ) the chain is on the lumenal side. The helical transmembrane segment at 627–647 (IHLAGLLIILSAFYALYKIHS) threads the bilayer. Topologically, residues 648-655 (RINSYTRA) are cytoplasmic. A helical transmembrane segment spans residues 656–676 (IFAIQISLVAAMLAVTHRSVI). Topologically, residues 677–687 (SLQLRQGLPRE) are lumenal. Residues 688-708 (SQVAGWIIFFVSLFVMPILHY) form a helical membrane-spanning segment. Residues 709 to 720 (RKPNNDYKVRLL) are Cytoplasmic-facing. A helical transmembrane segment spans residues 721-741 (IIYLTFAPSFIILTISFESLF). Over 742–776 (YFLFTSYMVQWIEIENKIKEMKTQKDENWLQVLRV) the chain is Lumenal. The helical transmembrane segment at 777–797 (SVIGFFLLQVAFFGTGNVASI) threads the bilayer. Topologically, residues 798-807 (SSFSLESVCR) are cytoplasmic. Residues 808–828 (LLPIFDPFLMGALLMLKLIIP) form a helical membrane-spanning segment. Residues 829 to 848 (YGLLSTCLGILNLKLNFKDY) are Lumenal-facing. The helical transmembrane segment at 849 to 869 (TISSLIISMSDILSLNFFYLL) threads the bilayer. The Cytoplasmic segment spans residues 870–885 (RTEGSWLDIGITISNY). Residues 886–906 (CLAILSSLFMLILEVLGHVLL) form a helical membrane-spanning segment. At 907-919 (KNVIIQDKTKKTQ) the chain is on the lumenal side.

It belongs to the PIGG/PIGN/PIGO family. PIGN subfamily. As to quaternary structure, interacts with CSF1; CSF1 channels phosphatidylethanolamine to MCD4 in the endoplasmic reticulum at contact sites to support GPI anchor biosynthesis. N-glycosylated.

Its subcellular location is the endoplasmic reticulum membrane. The protein localises to the golgi apparatus membrane. It is found in the vacuole membrane. It participates in glycolipid biosynthesis; glycosylphosphatidylinositol-anchor biosynthesis. Functionally, ethanolamine phosphate transferase involved in glycosylphosphatidylinositol-anchor biosynthesis. Transfers ethanolamine phosphate to the first alpha-1,4-linked mannose of the glycosylphosphatidylinositol precursor of GPI-anchor. Ethanolamine phosphate on the alpha-1,4-linked mannose is essential for further mannosylation by GPI10 and is necessary for an efficient recognition of GPI lipids and GPI proteins by the GPI transamidase, for the efficient transport of GPI anchored proteins from endoplasmic reticulum to Golgi and for the physiological incorporation of ceramides into GPI anchors by lipid remodeling. Also involved in non-mitochondrial ATP movements across membrane and participates in Golgi and endoplasmic reticulum function, Also required for the incorporation of BGL2 into the cell wall. This Saccharomyces cerevisiae (strain ATCC 204508 / S288c) (Baker's yeast) protein is GPI ethanolamine phosphate transferase 1 (MCD4).